Reading from the N-terminus, the 195-residue chain is Probable molybdenum cofactor guanylyltransferase (195 aa).

GTP contacts are provided by residues Leu6–Gly8, Lys18, Asp67, and Asp93. Asp93 lines the Mg(2+) pocket.

Belongs to the MobA family. Mg(2+) serves as cofactor.

The protein resides in the cytoplasm. It catalyses the reaction Mo-molybdopterin + GTP + H(+) = Mo-molybdopterin guanine dinucleotide + diphosphate. Functionally, transfers a GMP moiety from GTP to Mo-molybdopterin (Mo-MPT) cofactor (Moco or molybdenum cofactor) to form Mo-molybdopterin guanine dinucleotide (Mo-MGD) cofactor. The chain is Probable molybdenum cofactor guanylyltransferase from Thermococcus sibiricus (strain DSM 12597 / MM 739).